A 182-amino-acid polypeptide reads, in one-letter code: Ferritin heavy chain (182 aa).

N-acetylmethionine is present on methionine 1. An N-acetylthreonine; in Ferritin heavy chain, N-terminally processed modification is found at threonine 2. One can recognise a Ferritin-like diiron domain in the interval 11 to 160; sequence QNYHQDSEAA…DHVTNLRRMG (150 aa). Residues glutamate 28, glutamate 63, histidine 66, glutamate 108, and glutamine 142 each contribute to the Fe cation site.

Belongs to the ferritin family. As to quaternary structure, oligomer of 24 subunits. There are two types of subunits: L (light) chain and H (heavy) chain. The major chain can be light or heavy, depending on the species and tissue type. The functional molecule forms a roughly spherical shell with a diameter of 12 nm and contains a central cavity into which the insoluble mineral iron core is deposited. Interacts with NCOA4; NCOA4 promotes targeting of the iron-binding ferritin complex to autolysosomes following starvation or iron depletion.

It is found in the cytoplasm. The protein resides in the lysosome. Its subcellular location is the cytoplasmic vesicle. The protein localises to the autophagosome. It catalyses the reaction 4 Fe(2+) + O2 + 4 H(+) = 4 Fe(3+) + 2 H2O. In terms of biological role, stores iron in a soluble, non-toxic, readily available form. Important for iron homeostasis. Has ferroxidase activity. Iron is taken up in the ferrous form and deposited as ferric hydroxides after oxidation. Also plays a role in delivery of iron to cells. Mediates iron uptake in capsule cells of the developing kidney. Delivery to lysosomes is mediated by the cargo receptor NCOA4 for autophagic degradation and release of iron. In Equus caballus (Horse), this protein is Ferritin heavy chain (FTH1).